The sequence spans 642 residues: DNA primase (642 aa).

A CHC2-type zinc finger spans residues Cys-41–Cys-65. The Toprim domain maps to His-262 to Ala-348. Mg(2+) is bound by residues Glu-268, Asp-319, and Asp-321. The tract at residues Asn-445–Pro-480 is disordered.

This sequence belongs to the DnaG primase family. In terms of assembly, monomer. Interacts with DnaB. The cofactor is Zn(2+). It depends on Mg(2+) as a cofactor.

The catalysed reaction is ssDNA + n NTP = ssDNA/pppN(pN)n-1 hybrid + (n-1) diphosphate.. RNA polymerase that catalyzes the synthesis of short RNA molecules used as primers for DNA polymerase during DNA replication. The chain is DNA primase from Mycobacterium leprae (strain TN).